The chain runs to 206 residues: MELKVTTLEGQEAGSVQLSDAIFGLEPRNDIVQRCVIWQLAKRQAGTHKAKGRAEVWRTGKKMYKQKGTGGARHGSQRVPQFRGGGRAFGPVVRSHAIDLPKKVRALALRHALSAKAKGGGLIVIDKAELEAAKTKALVGAFSGLGLTNALIIDGAEVNTGFATAARNIPNIDVLPIQGINVYDIVRRRKLVLTKAALDALEARFK.

It belongs to the universal ribosomal protein uL4 family. As to quaternary structure, part of the 50S ribosomal subunit.

One of the primary rRNA binding proteins, this protein initially binds near the 5'-end of the 23S rRNA. It is important during the early stages of 50S assembly. It makes multiple contacts with different domains of the 23S rRNA in the assembled 50S subunit and ribosome. Its function is as follows. Forms part of the polypeptide exit tunnel. This Rhodopseudomonas palustris (strain HaA2) protein is Large ribosomal subunit protein uL4.